We begin with the raw amino-acid sequence, 427 residues long: Serine hydroxymethyltransferase (427 aa).

(6S)-5,6,7,8-tetrahydrofolate is bound by residues L127 and 131–133 (GHL). Position 236 is an N6-(pyridoxal phosphate)lysine (K236).

This sequence belongs to the SHMT family. In terms of assembly, homodimer. Requires pyridoxal 5'-phosphate as cofactor.

It localises to the cytoplasm. It carries out the reaction (6R)-5,10-methylene-5,6,7,8-tetrahydrofolate + glycine + H2O = (6S)-5,6,7,8-tetrahydrofolate + L-serine. Its pathway is one-carbon metabolism; tetrahydrofolate interconversion. The protein operates within amino-acid biosynthesis; glycine biosynthesis; glycine from L-serine: step 1/1. Its function is as follows. Catalyzes the reversible interconversion of serine and glycine with tetrahydrofolate (THF) serving as the one-carbon carrier. This reaction serves as the major source of one-carbon groups required for the biosynthesis of purines, thymidylate, methionine, and other important biomolecules. Also exhibits THF-independent aldolase activity toward beta-hydroxyamino acids, producing glycine and aldehydes, via a retro-aldol mechanism. The sequence is that of Serine hydroxymethyltransferase from Paramagnetospirillum magneticum (strain ATCC 700264 / AMB-1) (Magnetospirillum magneticum).